The sequence spans 423 residues: Histidine--tRNA ligase (423 aa).

This sequence belongs to the class-II aminoacyl-tRNA synthetase family. Homodimer.

It localises to the cytoplasm. It carries out the reaction tRNA(His) + L-histidine + ATP = L-histidyl-tRNA(His) + AMP + diphosphate + H(+). The chain is Histidine--tRNA ligase from Anoxybacillus flavithermus (strain DSM 21510 / WK1).